The sequence spans 299 residues: NADH-cytochrome b5 reductase 2 (299 aa).

Residues 13 to 35 (SFKVLAPFAAAVGSVGIAYQYST) form a helical membrane-spanning segment. Positions 50-154 (DEWIDLKLAK…KGPVVKWKWE (105 aa)) constitute an FAD-binding FR-type domain. 157–192 (QYKSIALIGGGTGITPLYQLMHEITKNPEDKTKVNL) provides a ligand contact to FAD.

It belongs to the flavoprotein pyridine nucleotide cytochrome reductase family. Requires FAD as cofactor.

It is found in the mitochondrion outer membrane. The enzyme catalyses 2 Fe(III)-[cytochrome b5] + NADH = 2 Fe(II)-[cytochrome b5] + NAD(+) + H(+). In terms of biological role, may mediate the reduction of outer membrane cytochrome b5. This chain is NADH-cytochrome b5 reductase 2 (MCR1), found in Debaryomyces hansenii (strain ATCC 36239 / CBS 767 / BCRC 21394 / JCM 1990 / NBRC 0083 / IGC 2968) (Yeast).